The following is a 191-amino-acid chain: Small ribosomal subunit protein uS7 (191 aa).

Positions 56 to 80 (NKSGEQGDGDGESGGKAGGIKKRSL) are disordered.

It belongs to the universal ribosomal protein uS7 family. As to quaternary structure, part of the 30S ribosomal subunit. Contacts proteins S9 and S11.

Its function is as follows. One of the primary rRNA binding proteins, it binds directly to 16S rRNA where it nucleates assembly of the head domain of the 30S subunit. Is located at the subunit interface close to the decoding center, probably blocks exit of the E-site tRNA. This chain is Small ribosomal subunit protein uS7, found in Coxiella burnetii (strain CbuK_Q154) (Coxiella burnetii (strain Q154)).